Consider the following 139-residue polypeptide: uncharacterized protein (139 aa).

This is an uncharacterized protein from Invertebrate iridescent virus 3 (IIV-3).